We begin with the raw amino-acid sequence, 707 residues long: Methionine--tRNA ligase (707 aa).

The 'HIGH' region signature appears at 13–23; the sequence is PYANGNFHIGH. 4 residues coordinate Zn(2+): Cys147, Cys150, Cys160, and Cys163. The 'KMSKS' region signature appears at 344–348; that stretch reads KMSKS. Lys347 provides a ligand contact to ATP. Residues 601-707 enclose the tRNA-binding domain; it reads DFAKVDLRIA…PGATPGMRIH (107 aa).

It belongs to the class-I aminoacyl-tRNA synthetase family. MetG type 1 subfamily. As to quaternary structure, homodimer. The cofactor is Zn(2+).

The protein localises to the cytoplasm. The catalysed reaction is tRNA(Met) + L-methionine + ATP = L-methionyl-tRNA(Met) + AMP + diphosphate. In terms of biological role, is required not only for elongation of protein synthesis but also for the initiation of all mRNA translation through initiator tRNA(fMet) aminoacylation. The sequence is that of Methionine--tRNA ligase from Polaromonas naphthalenivorans (strain CJ2).